Reading from the N-terminus, the 405-residue chain is Diaminopimelate decarboxylase (405 aa).

Lys46 is subject to N6-(pyridoxal phosphate)lysine. Pyridoxal 5'-phosphate contacts are provided by residues Gly225 and 259–262 (EPGR). Residues Arg262, Arg298, and Tyr302 each coordinate substrate. Cys329 acts as the Proton donor in catalysis. Residues Glu330 and Tyr358 each coordinate substrate. Position 358 (Tyr358) interacts with pyridoxal 5'-phosphate.

It belongs to the Orn/Lys/Arg decarboxylase class-II family. LysA subfamily. In terms of assembly, homodimer. Pyridoxal 5'-phosphate serves as cofactor.

It carries out the reaction meso-2,6-diaminopimelate + H(+) = L-lysine + CO2. It functions in the pathway amino-acid biosynthesis; L-lysine biosynthesis via DAP pathway; L-lysine from DL-2,6-diaminopimelate: step 1/1. In terms of biological role, specifically catalyzes the decarboxylation of meso-diaminopimelate (meso-DAP) to L-lysine. This Helicobacter pylori (strain J99 / ATCC 700824) (Campylobacter pylori J99) protein is Diaminopimelate decarboxylase.